Reading from the N-terminus, the 891-residue chain is Mating-type protein A-alpha Z3 (891 aa).

A DNA-binding region (homeobox; TALE-type) is located at residues 111–189 (EWQENMPPVP…AARIRIGWTH (79 aa)). Residues 331–360 (AAHEKRQQARREQRQAKNERDAAQMREEQR) are compositionally biased toward basic and acidic residues. 4 disordered regions span residues 331 to 592 (AAHE…VNWD), 606 to 671 (YLDS…ASET), 779 to 812 (SILS…VEPS), and 836 to 861 (PKKD…SPDT). 2 stretches are compositionally biased toward acidic residues: residues 369 to 400 (SSDD…SDSD) and 427 to 457 (ADDE…EEDT). Composition is skewed to low complexity over residues 542-559 (PSKT…KSST) and 612-650 (SSRP…SSVS). Positions 651–660 (TCETVGTDSS) are enriched in polar residues. Positions 841–850 (RYAERAERRA) are enriched in basic and acidic residues.

The protein belongs to the TALE/M-ATYP homeobox family.

The protein resides in the nucleus. Specifies A-alpha-3 mating-type. May regulate the expression of genes specific to the homokaryotic cell type. The polypeptide is Mating-type protein A-alpha Z3 (Schizophyllum commune (Split gill fungus)).